A 678-amino-acid polypeptide reads, in one-letter code: AAC-rich mRNA clone AAC4 protein (678 aa).

Positions 55–73 (NNNNNNNNNNNNNNNNNNN) are enriched in low complexity. A disordered region spans residues 55–75 (NNNNNNNNNNNNNNNNNNNTS). Residues 243-263 (IIPIYHEIILVLCNWLVVAFY) traverse the membrane as a helical segment. The segment covering 318–346 (NNNNNNNNNNNNNNNNNNNNNNNNKTNNN) has biased composition (low complexity). The tract at residues 318 to 347 (NNNNNNNNNNNNNNNNNNNNNNNNKTNNNQ) is disordered.

It is found in the membrane. The chain is AAC-rich mRNA clone AAC4 protein (AAC4) from Dictyostelium discoideum (Social amoeba).